A 601-amino-acid chain; its full sequence is Leucine zipper putative tumor suppressor 1 (601 aa).

Gly2 carries N-myristoyl glycine lipidation. The interval 135–190 (GAILHSSPESTNHQLHPMPPDKPKEQELKPGLCSGALSDSGRNSMSSLPTHSTTSS) is disordered. Basic and acidic residues predominate over residues 153–162 (PPDKPKEQEL). A compositionally biased stretch (polar residues) spans 174–190 (SGRNSMSSLPTHSTTSS). Positions 255–573 (PLSTDECTIQ…RLEKALQQLA (319 aa)) form a coiled coil.

The protein belongs to the LZTS family. In terms of assembly, binds EEF1G, TLK2 and CDK1. Post-translationally, phosphorylated on serine residues. Hyperphosphorylated by the cAMP-dependent kinase PKA during cell-cycle progression. In terms of tissue distribution, highly expressed in brain, in particular in cortex, the CA2 region of the hippocampus, olfactory bulb, striatum and pons. Not detectable in the other tissues tested.

It is found in the cytoplasm. Its subcellular location is the cell membrane. It localises to the cell projection. The protein localises to the dendritic spine. The protein resides in the postsynaptic density. It is found in the synapse. Involved in the regulation of cell growth. May stabilize the active CDC2-cyclin B1 complex and thereby contribute to the regulation of the cell cycle and the prevention of uncontrolled cell proliferation. May act as tumor suppressor. The polypeptide is Leucine zipper putative tumor suppressor 1 (Lzts1) (Rattus norvegicus (Rat)).